The chain runs to 976 residues: MTNGSTEDNSYRYTPGLAAKIEAKWQKHWADKGTFNAPNPTGDLAEPGAELPEDRKFIQDMFPYPSGVGLHVGHPLGYIGTDVFARFHRMKGANVLHTLGYDAFGLPAEQYAVQTGTHPRTTTMANIANMERQLGRLGLGHDKRRSFATTDTDYYRWTQWIFLQIYNSWFDPEAKNANGTLGKARPIKELEEKLAAERADWADLSAAEKQEILDSYRLVYRSNSTVNWCPGLGTVLANEEVTAEGRSERGNFPVFRKNLQQWMMRITAYSDRLIDDLEYLDWPEKVKSMQRNWIGRSRGAEVTFDCLGNDIDVFTTRPDTLFGATYMVLAPEHELVDTLVAQSGNSSSGSDAYTDVDPRWTYGQANPAAAVEAYRAAIAAKSDLERQENKEKTGVFLGVYATNPVNGAQVPVFIADYVLTGYGTGAIMAVPAHDSRDFEFATEFGLPIVPVLAPEGAEAGAGEQGGAELTEAFTEDGPHINSNNSDGLELNGLGKAEAIDKAIEWLESKGVGSGKIQYKLRDWLFARQRYWGEPFPIVYDEDGTAHGLPEDMLPVELPEVEDYKPVSFDPDDKDSAPQPPLAKAKDWVEVTLDLGDGEKTYYRDTNVMPQWAGSSWYQLRYIDPNNDNALVDIENERYWVGPREGRPSGGVDLYVGGVEHAVLHLLYARFWHKVLFDLGVVSSFEPYYRLYNQGYIQAYAYTDSRGVYVPAEEVTERDGKFFWVRKADDAEGVTKEEEVFQEYGKMGKSLKNAVSPDEICDDYGADTLRVYEMAMGPLDTSRPWATKDVVGAQRFLQRAWRLAVDENTGKGSVSDDALTDEDLKALHRTIAGVHENYAELRDNTAVAKLIEYVNYLTKTYSAGQAPRAAVEPLVQMLSPVAPHIAEEMWEILGHSEGITYESFPEWDEKWLVDDTIELPVQVMGKLRGRINVAADASREDIEAAALEEPNVASHIEGKTVAKIIVVPGKMVNIVAK.

The 'HIGH' region motif lies at 63–74; that stretch reads PYPSGVGLHVGH. Positions 745-749 match the 'KMSKS' region motif; the sequence is KMGKS. ATP is bound at residue lysine 748.

This sequence belongs to the class-I aminoacyl-tRNA synthetase family.

The protein localises to the cytoplasm. It catalyses the reaction tRNA(Leu) + L-leucine + ATP = L-leucyl-tRNA(Leu) + AMP + diphosphate. The protein is Leucine--tRNA ligase of Corynebacterium jeikeium (strain K411).